The chain runs to 519 residues: Xylose import ATP-binding protein XylG (519 aa).

ABC transporter domains follow at residues 6–245 and 262–507; these read MTMR…VGRE and FEAR…IRPV. 38–45 provides a ligand contact to ATP; the sequence is GENGAGKS.

It belongs to the ABC transporter superfamily. Xylose importer (TC 3.A.1.2.4) family. The complex is composed of two ATP-binding proteins (XylG), two transmembrane proteins (XylH) and a solute-binding protein (XylF).

Its subcellular location is the cell inner membrane. It carries out the reaction D-xylose(out) + ATP + H2O = D-xylose(in) + ADP + phosphate + H(+). In terms of biological role, part of the ABC transporter complex XylFGH involved in xylose import. Responsible for energy coupling to the transport system. This Paraburkholderia xenovorans (strain LB400) protein is Xylose import ATP-binding protein XylG.